The sequence spans 536 residues: MSVAAMTMDDQRPCMNSYDKMPPTKYEQNLNILNSSQNSGATGGPASPTPSGLEDHHHHHHPHPHHHHHQEQQQQQQQQQHLQQQQQQQQQQHAAAVAEAVAAAEQRQRLLEDEIENLKLEQVRMAQQCADAQRREKILMRRLANKEQEFQDYVSQIAEYKAQQAPTALALRTALLDPAVNLLFERLKKELKATKAKLEETQNELSAWKFTPDSNTGKRLMAKCRLLYQENEELGKMTSNGRLAKLETELAMQKSFSEEVKKSQSELDDFLQELDEDVEGMQSTILFLQQELKTTRDRIQTLEKENAQLKQAIKDEVVAPAAATNGGTNTTINKLETIHEDACMANNPTNPDCYNGNTNNEQIAAVPQIPLSDDGSNMNGNAARLARKRNYQEEEALPTVVVVPTPTPVGNNVQEAPPIREVTAPRTLPPKKSKLRGITTRRNSQLEEDHQPVTTPVAVPMIVDNAVAGMASEEAAAAAAAVNNSNTGIIPETGVQVGVPVEGGDPGAPAAPGRILTRRRSVRMQQNGSGAVDYST.

The interval 1 to 91 (MSVAAMTMDD…LQQQQQQQQQ (91 aa)) is disordered. Low complexity predominate over residues 28-39 (QNLNILNSSQNS). The span at 57–69 (HHHHHPHPHHHHH) shows a compositional bias: basic residues. A compositionally biased stretch (low complexity) spans 72-91 (QQQQQQQQQHLQQQQQQQQQ). Positions 254–319 (KSFSEEVKKS…KQAIKDEVVA (66 aa)) form a coiled coil. Residues 424–450 (APRTLPPKKSKLRGITTRRNSQLEEDH) form a disordered region.

This sequence belongs to the fl(2)d family. Component of the WMM complex, a N6-methyltransferase complex composed of a catalytic subcomplex, named MAC, and of an associated subcomplex, named MACOM. The MAC subcomplex is composed of Ime4/Mettl3 and Mettl14. The MACOM subcomplex is composed of fl(2)d, Flacc/Xio, Hakai, vir, and, in some cases of nito. Interacts with vir and msk. Part of a complex containing fl(2)d, Sxl and vir.

The protein resides in the nucleus. Functionally, associated component of the WMM complex, a complex that mediates N6-methyladenosine (m6A) methylation of mRNAs, a modification that plays a role in the efficiency of mRNA splicing and is required for sex determination. Required for sex determination and dosage compensation via Sxl alternative splicing: m6A methylation acts as a key regulator of Sxl pre-mRNA and promotes female-specific alternative splicing of Sxl, which determines female physiognomy. M6A methylation is also required for neuronal functions. Required for proper inclusion of regulated exons in Ubx transcripts, leading to isoforms Ia/b and IIa/b. This chain is Pre-mRNA-splicing regulator female-lethal(2)D, found in Drosophila melanogaster (Fruit fly).